We begin with the raw amino-acid sequence, 408 residues long: Imidazolonepropionase (408 aa).

Positions 73 and 75 each coordinate Fe(3+). Positions 73 and 75 each coordinate Zn(2+). Residues R82, Y145, and H178 each contribute to the 4-imidazolone-5-propanoate site. Y145 is an N-formimidoyl-L-glutamate binding site. Residue H243 participates in Fe(3+) binding. H243 lines the Zn(2+) pocket. Q246 lines the 4-imidazolone-5-propanoate pocket. D318 is a Fe(3+) binding site. D318 is a binding site for Zn(2+). The N-formimidoyl-L-glutamate site is built by N320 and G322. S323 is a 4-imidazolone-5-propanoate binding site.

This sequence belongs to the metallo-dependent hydrolases superfamily. HutI family. The cofactor is Zn(2+). Fe(3+) serves as cofactor.

The protein resides in the cytoplasm. The catalysed reaction is 4-imidazolone-5-propanoate + H2O = N-formimidoyl-L-glutamate. It functions in the pathway amino-acid degradation; L-histidine degradation into L-glutamate; N-formimidoyl-L-glutamate from L-histidine: step 3/3. In terms of biological role, catalyzes the hydrolytic cleavage of the carbon-nitrogen bond in imidazolone-5-propanoate to yield N-formimidoyl-L-glutamate. It is the third step in the universal histidine degradation pathway. The chain is Imidazolonepropionase from Shewanella sp. (strain MR-4).